The chain runs to 188 residues: Methylamine dehydrogenase light chain (188 aa).

The tat-type signal signal peptide spans 1–57; it reads MLGNFRFDDMVEKLSRRVAGQTSRRSVIGKLGTAMLGIGLVPLLPVDRRGRVSRANA. 6 cysteine pairs are disulfide-bonded: Cys-80/Cys-145, Cys-86/Cys-118, Cys-93/Cys-178, Cys-95/Cys-143, Cys-103/Cys-134, and Cys-135/Cys-166. Position 114 is a tryptophylquinone (Trp-114). The tryptophan tryptophylquinone (Trp-Trp) cross-link spans 114 to 165; the sequence is WVASCYNPTDGQSYLIAYRDCCGYNVSGRCPCLNTEGELPVYRPEFANDIIW.

This sequence belongs to the aromatic amine dehydrogenase light chain family. As to quaternary structure, heterotetramer of two light and two heavy chains. Tryptophan tryptophylquinone residue is required as a cofactor. Predicted to be exported by the Tat system. The position of the signal peptide cleavage has not been experimentally proven. Post-translationally, tryptophan tryptophylquinone (TTQ) is formed by oxidation of the indole ring of a tryptophan to form tryptophylquinone followed by covalent cross-linking with another tryptophan residue.

The protein resides in the periplasm. It carries out the reaction 2 oxidized [amicyanin] + methylamine + H2O = 2 reduced [amicyanin] + formaldehyde + NH4(+) + 2 H(+). It functions in the pathway one-carbon metabolism; methylamine degradation; formaldehyde from methylamine: step 1/1. Functionally, methylamine dehydrogenase carries out the oxidation of methylamine. Electrons are passed from methylamine dehydrogenase to amicyanin. This chain is Methylamine dehydrogenase light chain (mauA), found in Paracoccus denitrificans.